A 426-amino-acid polypeptide reads, in one-letter code: 3-phosphoshikimate 1-carboxyvinyltransferase (426 aa).

Residues Lys22, Ser23, and Arg27 each contribute to the 3-phosphoshikimate site. Lys22 contacts phosphoenolpyruvate. Gly96 and Arg124 together coordinate phosphoenolpyruvate. 7 residues coordinate 3-phosphoshikimate: Ser170, Ser171, Gln172, Ser198, Asp314, Asn337, and Lys341. Gln172 is a binding site for phosphoenolpyruvate. Asp314 acts as the Proton acceptor in catalysis. Positions 345, 387, and 412 each coordinate phosphoenolpyruvate.

This sequence belongs to the EPSP synthase family. Monomer.

The protein localises to the cytoplasm. The catalysed reaction is 3-phosphoshikimate + phosphoenolpyruvate = 5-O-(1-carboxyvinyl)-3-phosphoshikimate + phosphate. Its pathway is metabolic intermediate biosynthesis; chorismate biosynthesis; chorismate from D-erythrose 4-phosphate and phosphoenolpyruvate: step 6/7. Catalyzes the transfer of the enolpyruvyl moiety of phosphoenolpyruvate (PEP) to the 5-hydroxyl of shikimate-3-phosphate (S3P) to produce enolpyruvyl shikimate-3-phosphate and inorganic phosphate. This is 3-phosphoshikimate 1-carboxyvinyltransferase from Vibrio campbellii (strain ATCC BAA-1116).